A 457-amino-acid chain; its full sequence is MALWGGRFTQAADKRFKDFNDSLRFDYRLAEQDIQGSIGWSKALVKVNVLTVEEQHQLEQALNELLVEVRSNPQAILQDDAEDIHSWVESKLIDKVGNLGKKLHTGRSRNDQVAVDIKLWCKQRVIELQESVRNLQRHLVQTAENTQQAVMPGYTHLQRAQPITFAHWCMAYVEMFDRDYSRLTDAYNRMNTCPLGSGALAGTAYAVDRDSLAHDLGFAFATRNSLDSVSDRDHIVELLSIASLSMAHLSRFAEDMIIFNSGEANFVELSDRVTSGSSLMPQKKNPDACELIRGKTGRVIGSLTSMLITLKGLPLAYNKDMQEDKEGIFDALDTWQNCVDMATFVLDELKVNVERTREAALKGYSNATELADYLVSKGVPFRDSHHIVGETVVYAIEKGKGLEDLTIPEFRQFSEVVGDDVYEILSLQSCLDKRCAKGGVSPLRVAEAIAEAKTRFA.

The protein belongs to the lyase 1 family. Argininosuccinate lyase subfamily.

The protein resides in the cytoplasm. It carries out the reaction 2-(N(omega)-L-arginino)succinate = fumarate + L-arginine. The protein operates within amino-acid biosynthesis; L-arginine biosynthesis; L-arginine from L-ornithine and carbamoyl phosphate: step 3/3. This Haemophilus influenzae (strain PittGG) protein is Argininosuccinate lyase.